Reading from the N-terminus, the 1402-residue chain is Eukaryotic translation initiation factor 4 gamma 1 (1402 aa).

Disordered regions lie at residues 1–123 (MSGA…SPEP) and 165–402 (HEPN…YEYK). 2 positions are modified to phosphothreonine: threonine 11 and threonine 27. The segment covering 53–64 (GPEHSPSESQPS) has biased composition (low complexity). Over residues 65–76 (SPSPTPSPPPIL) the composition is skewed to pro residues. Residue serine 120 is modified to Phosphoserine. Residues 238-251 (ASATPPAVPSATPA) are compositionally biased toward low complexity. Acidic residues predominate over residues 261-275 (QEEEGEEEEEEEEGE). Basic and acidic residues-rich tracts occupy residues 280-290 (ESDKGGEDLHP) and 324-340 (KELN…DAFK). Residues 359 to 370 (PTPESEGSSGPS) show a composition bias toward low complexity. Positions 379–388 (WDAKEDKIHN) are enriched in basic and acidic residues. Position 452 is a phosphothreonine (threonine 452). 4 disordered regions span residues 476-517 (ANLG…PPKG), 536-563 (AEKA…GSKT), 600-636 (SKGS…ATTE), and 828-1028 (MAKG…KREA). A compositionally biased stretch (low complexity) spans 479–488 (GRPALSSRGP). Omega-N-methylarginine occurs at positions 490 and 499. Over residues 547 to 563 (TAADKDRGEEDADGSKT) the composition is skewed to basic and acidic residues. The 227-residue stretch at 567 to 793 (FRRVRSILNK…QDVLDLRQSN (227 aa)) folds into the MIF4G domain. Over residues 602–621 (GSLTSSLRRPFQNPTSQWPS) the composition is skewed to polar residues. The residue at position 832 (serine 832) is a Phosphoserine. 2 positions are modified to omega-N-methylarginine: arginine 836 and arginine 846. Phosphoserine occurs at positions 881 and 896. Residues 892–913 (GGRLSWGKGSSGSGAKPSDAAS) show a composition bias toward low complexity. Residue lysine 899 is modified to N6-acetyllysine. Polar residues predominate over residues 918–937 (PATSTLNRFSALQQAVPTES). A phosphoserine mark is found at serine 948 and serine 950. A compositionally biased stretch (basic and acidic residues) spans 949–981 (LSRERGGKAGEPRRRLERSERGGDRGDRLDRAR). Residue serine 988 is modified to Phosphoserine; by PKC/PRKCA. The segment covering 989–1028 (FSKEVEERSRERPSQPEGLRKAASLTEDRDRGRDAAKREA) has biased composition (basic and acidic residues). Phosphoserine is present on residues serine 990, serine 997, and serine 1012. Threonine 1014 carries the post-translational modification Phosphothreonine. A phosphoserine mark is found at serine 1034 and serine 1041. Positions 1044 to 1166 (ELEKKSKAII…PMGELFREIT (123 aa)) constitute an MI domain. A W2 domain is found at 1231–1401 (EESEAPGQRA…REVEEEESDH (171 aa)). Phosphoserine is present on serine 1399.

Belongs to the eukaryotic initiation factor 4G family. As to quaternary structure, eIF4F is a multi-subunit complex, the composition of which varies with external and internal environmental conditions. It is composed of at least EIF4A, EIF4E (cap-binding) and EIF4G1/EIF4G3. Interacts with eIF3 complex, mutually exclusive with EIF4A1 or EIF4A2, EIF4E and through its N-terminus with PABPC1. Interacts with EIF4E or with EIF1 (mutually exclusive) through a common binding site. Interacts through its C-terminus with the serine/threonine kinases MKNK1, and with MKNK2. Appears to act as a scaffold protein, holding these enzymes in place to phosphorylate EIF4E. Non-phosphorylated EIF4EBP1 competes with EIF4G1/EIF4G3 to interact with EIF4E; insulin stimulated MAP-kinase (MAPK1 and MAPK3) phosphorylation of EIF4EBP1 causes dissociation of the complex allowing EIF4G1/EIF4G3 to bind and consequent initiation of translation. EIF4G1/EIF4G3 interacts with PABPC1 to bring about circularization of the mRNA. Interacts with EIF4E3. Interacts with CIRBP and MIF4GD. Interacts with RBM4. Interacts with HNRNPD/AUF1; the interaction requires RNA. Interacts with DDX3X; the interaction requires RNA. Interacts with DAZAP2. Post-translationally, phosphorylated at multiple sites in vivo. Phosphorylation at Ser-988 by PRKCA induces binding to MKNK1.

The protein localises to the cytoplasm. It is found in the nucleus. It localises to the stress granule. Its function is as follows. Component of the protein complex eIF4F, which is involved in the recognition of the mRNA cap, ATP-dependent unwinding of 5'-terminal secondary structure and recruitment of mRNA to the ribosome. Exists in two complexes, either with EIF1 or with EIF4E (mutually exclusive). Together with EIF1, is required for leaky scanning, in particular for avoiding cap-proximal start codon. Together with EIF4E, antagonizes the scanning promoted by EIF1-EIF4G1 and locates the start codon (through a TISU element) without scanning. As a member of the eIF4F complex, required for endoplasmic reticulum stress-induced ATF4 mRNA translation. This Oryctolagus cuniculus (Rabbit) protein is Eukaryotic translation initiation factor 4 gamma 1 (EIF4G1).